Here is a 295-residue protein sequence, read N- to C-terminus: Acetylglutamate kinase (295 aa).

Substrate-binding positions include 66–67 (GG), Arg88, and Asn193.

It belongs to the acetylglutamate kinase family. ArgB subfamily.

Its subcellular location is the cytoplasm. It catalyses the reaction N-acetyl-L-glutamate + ATP = N-acetyl-L-glutamyl 5-phosphate + ADP. It participates in amino-acid biosynthesis; L-arginine biosynthesis; N(2)-acetyl-L-ornithine from L-glutamate: step 2/4. Functionally, catalyzes the ATP-dependent phosphorylation of N-acetyl-L-glutamate. In Gluconobacter oxydans (strain 621H) (Gluconobacter suboxydans), this protein is Acetylglutamate kinase.